The sequence spans 507 residues: tRNA (guanine(10)-N(2))-methyltransferase TRMT11 (507 aa).

Residues 459-475 (EKTKKKEQKKKSVENHL) are compositionally biased toward basic and acidic residues. The tract at residues 459-507 (EKTKKKEQKKKSVENHLKSKNNNDVINNNSNDTNSNNNCNNENNIENQK) is disordered. The span at 480–507 (NNDVINNNSNDTNSNNNCNNENNIENQK) shows a compositional bias: low complexity.

Belongs to the class I-like SAM-binding methyltransferase superfamily. TRM11 methyltransferase family. As to quaternary structure, part of the heterodimeric TRMT11-TRM112 methyltransferase complex; this complex forms an active tRNA methyltransferase, where TRMT112 acts as an activator of the catalytic subunit TRMT11.

The protein localises to the cytoplasm. The enzyme catalyses guanosine(10) in tRNA + S-adenosyl-L-methionine = N(2)-methylguanosine(10) in tRNA + S-adenosyl-L-homocysteine + H(+). Functionally, catalytic subunit of the TRMT11-TRM112 methyltransferase complex, that specifically mediates the S-adenosyl-L-methionine-dependent N(2)-methylation of guanosine nucleotide at position 10 (m2G10) in tRNAs. This is one of the major tRNA (guanine-N(2))-methyltransferases. The sequence is that of tRNA (guanine(10)-N(2))-methyltransferase TRMT11 (trmt11) from Dictyostelium discoideum (Social amoeba).